A 417-amino-acid polypeptide reads, in one-letter code: MDKLKISANGPLNGEITVSGAKNAALPLMCAGLLTSGTLRLKNVPMLADVKTTQKLLQGMGARVLTDNISEFEINGGTVNNTCAPYELVRTMRASILVLGPTLARFGEAQVSLPGGCAIGSRPVDQHLKGLEAMGAEIVIEHGYVKAKGKLKGTRVAMDVVTVGGTENLLMAATLAEGTTVLENCAIEPEVVDLAECLVKMGAKISGIGTSTMIVEGVDELHGCEHSVVPDRIEAGTFLCAVAITGGRVVLRNAAPKTMEVVLDKLVEAGAVIEAGDDWIAIDMRQRPKAVDIRTVVHPGFPTDMQAQFMALNAVAEGSCRVVETIFENRFMHVPELNRMGANITTEGNTAFVQGVERLSGAVVKATDLRASASLVIAGLAARGETVVEQIYHLDRGYENIEKKLGSVGAKIERVSG.

Residue 22–23 coordinates phosphoenolpyruvate; the sequence is KN. Residue Arg-93 coordinates UDP-N-acetyl-alpha-D-glucosamine. The active-site Proton donor is the Cys-117. Cys-117 carries the 2-(S-cysteinyl)pyruvic acid O-phosphothioketal modification. Residues 122-126, Asp-304, and Ile-326 contribute to the UDP-N-acetyl-alpha-D-glucosamine site; that span reads RPVDQ.

This sequence belongs to the EPSP synthase family. MurA subfamily.

The protein resides in the cytoplasm. The enzyme catalyses phosphoenolpyruvate + UDP-N-acetyl-alpha-D-glucosamine = UDP-N-acetyl-3-O-(1-carboxyvinyl)-alpha-D-glucosamine + phosphate. The protein operates within cell wall biogenesis; peptidoglycan biosynthesis. Its function is as follows. Cell wall formation. Adds enolpyruvyl to UDP-N-acetylglucosamine. The sequence is that of UDP-N-acetylglucosamine 1-carboxyvinyltransferase from Neisseria meningitidis serogroup A / serotype 4A (strain DSM 15465 / Z2491).